We begin with the raw amino-acid sequence, 379 residues long: Stimulator of interferon genes protein (379 aa).

A run of 2 helical transmembrane segments spans residues 18–38 and 43–63; these read AKKA…DLGE and ILQW…FKGV. S-palmitoyl cysteine attachment occurs at residues Cys88 and Cys91. The next 2 membrane-spanning stretches (helical) occupy residues 89 to 109 and 114 to 134; these read LGCP…YTPF and HLPF…SILL. The interval 153–340 is cyclic dinucleotide-binding domain (CBD); sequence LNVAQGMAWS…RHLKQEEKEE (188 aa). The 2',3'-cGAMP site is built by Ser162, Tyr167, Arg238, and Thr263. 3',3'-c-di-GMP-binding positions include Ser162, Tyr167, 238-241, and Thr263; that span reads RVYT. Positions 167, 238, and 263 each coordinate 2',3'-cUAMP. A disordered region spans residues 338–363; sequence KEEVTVDSARTSVMPDPSMLPQGPEL. Residues 340 to 379 form a C-terminal tail (CTT) region; the sequence is EVTVDSARTSVMPDPSMLPQGPELLISSMDQPLPLRTDVF. Ser355 is modified (phosphoserine). Positions 363–366 match the pLxIS motif motif; the sequence is LLIS. A Phosphoserine; by TBK1 modification is found at Ser366.

Belongs to the STING family. As to quaternary structure, homodimer; forms a homodimer in absence of cyclic nucleotide (c-di-GMP or cGAMP). Homotetramer; in presence of cyclic nucleotide (c-di-GMP or cGAMP), forms tetramers and higher-order oligomers through side-by-side packing. Interacts (when phosphorylated) with IRF3; following activation and phosphorylation on the pLxIS motif by TBK1, recruits IRF3. Interacts with TBK1; when homodimer, leading to subsequent production of IFN-beta. Interacts (via transmembrane domain) with TMEM203. Phosphorylation by TBK1 leads to activation and production of IFN-beta. Following cyclic nucleotide (c-di-GMP or cGAMP)-binding, activation and translocation from the endoplasmic reticulum, STING1 is phosphorylated by TBK1 at Ser-366 in the pLxIS motif. The phosphorylated pLxIS motif constitutes an IRF3-binding motif, leading to recruitment of the transcription factor IRF3 to induce type-I interferons and other cytokines. In contrast, lacks phosphorylation site at position 358, leading to reduced production of type-I interferons and other cytokines.

The protein localises to the endoplasmic reticulum membrane. It localises to the cytoplasm. It is found in the perinuclear region. Its subcellular location is the endoplasmic reticulum-Golgi intermediate compartment membrane. The protein resides in the golgi apparatus membrane. The protein localises to the cytoplasmic vesicle. It localises to the autophagosome membrane. It is found in the mitochondrion outer membrane. Its subcellular location is the cell membrane. The enzyme catalyses H(+)(in) = H(+)(out). Its function is as follows. Facilitator of innate immune signaling that acts as a sensor of cytosolic DNA from bacteria and viruses and promotes low production of type I interferon (IFN-alpha and IFN-beta). Compared to other mammals, STING1-dependent type I interferon induction is strongly reduced in bats, suggesting that the cGAS-STING pathway promotes a limited inflammatory response. Innate immune response is triggered in response to non-CpG double-stranded DNA from viruses and bacteria delivered to the cytoplasm. Acts by binding cyclic dinucleotides: recognizes and binds cyclic di-GMP (c-di-GMP), a second messenger produced by bacteria, cyclic UMP-AMP (2',3'-cUAMP), and cyclic GMP-AMP (cGAMP), a messenger produced by CGAS in response to DNA virus in the cytosol. Upon binding to c-di-GMP, cUAMP or cGAMP, STING1 oligomerizes, translocates from the endoplasmic reticulum and is phosphorylated by TBK1 on the pLxIS motif, leading to recruitment and subsequent activation of the transcription factor IRF3 to induce expression of type I interferon and exert a potent anti-viral state. In addition to promote the production of type I interferons, plays a direct role in autophagy. Following cGAMP-binding, STING1 buds from the endoplasmic reticulum into COPII vesicles, which then form the endoplasmic reticulum-Golgi intermediate compartment (ERGIC). The ERGIC serves as the membrane source for WIPI2 recruitment and LC3 lipidation, leading to formation of autophagosomes that target cytosolic DNA or DNA viruses for degradation by the lysosome. Promotes autophagy by acting as a proton channel that directs proton efflux from the Golgi to facilitate MAP1LC3B/LC3B lipidation. The autophagy- and interferon-inducing activities can be uncoupled and autophagy induction is independent of TBK1 phosphorylation. The sequence is that of Stimulator of interferon genes protein from Pteronotus parnellii (Parnell's mustached bat).